We begin with the raw amino-acid sequence, 188 residues long: Phosphoribosylglycinamide formyltransferase (188 aa).

Residue 12–14 coordinates N(1)-(5-phospho-beta-D-ribosyl)glycinamide; sequence GSN. (6R)-10-formyltetrahydrofolate is bound by residues Lys-66, 91–94, and Asn-108; that span reads MRLI. Catalysis depends on His-110, which acts as the Proton donor.

The protein belongs to the GART family.

It catalyses the reaction N(1)-(5-phospho-beta-D-ribosyl)glycinamide + (6R)-10-formyltetrahydrofolate = N(2)-formyl-N(1)-(5-phospho-beta-D-ribosyl)glycinamide + (6S)-5,6,7,8-tetrahydrofolate + H(+). Its pathway is purine metabolism; IMP biosynthesis via de novo pathway; N(2)-formyl-N(1)-(5-phospho-D-ribosyl)glycinamide from N(1)-(5-phospho-D-ribosyl)glycinamide (10-formyl THF route): step 1/1. In terms of biological role, catalyzes the transfer of a formyl group from 10-formyltetrahydrofolate to 5-phospho-ribosyl-glycinamide (GAR), producing 5-phospho-ribosyl-N-formylglycinamide (FGAR) and tetrahydrofolate. The sequence is that of Phosphoribosylglycinamide formyltransferase from Staphylococcus aureus (strain MRSA252).